A 309-amino-acid polypeptide reads, in one-letter code: Protein FdhE homolog (309 aa).

Belongs to the FdhE family.

Its subcellular location is the cytoplasm. Functionally, necessary for formate dehydrogenase activity. This chain is Protein FdhE homolog, found in Citrobacter koseri (strain ATCC BAA-895 / CDC 4225-83 / SGSC4696).